We begin with the raw amino-acid sequence, 30 residues long: Ribonuclease pancreatic (30 aa).

A compositionally biased stretch (basic and acidic residues) spans 1 to 13; the sequence is KETAAAKFERQHM. Residues 1–21 are disordered; sequence KETAAAKFERQHMDPAPAAAX. Positions 7 and 10 each coordinate substrate. Histidine 12 serves as the catalytic Proton acceptor.

The protein belongs to the pancreatic ribonuclease family. As to quaternary structure, monomer. Interacts with and forms tight 1:1 complexes with RNH1. Dimerization of two such complexes may occur. Interaction with RNH1 inhibits this protein. In terms of tissue distribution, pancreas.

It localises to the secreted. The catalysed reaction is an [RNA] containing cytidine + H2O = an [RNA]-3'-cytidine-3'-phosphate + a 5'-hydroxy-ribonucleotide-3'-[RNA].. The enzyme catalyses an [RNA] containing uridine + H2O = an [RNA]-3'-uridine-3'-phosphate + a 5'-hydroxy-ribonucleotide-3'-[RNA].. In terms of biological role, endonuclease that catalyzes the cleavage of RNA on the 3' side of pyrimidine nucleotides. Acts on single-stranded and double-stranded RNA. The sequence is that of Ribonuclease pancreatic (RNASE1) from Odocoileus virginianus virginianus (Virginia white-tailed deer).